Consider the following 122-residue polypeptide: Large ribosomal subunit protein uL14 (122 aa).

This sequence belongs to the universal ribosomal protein uL14 family. As to quaternary structure, part of the 50S ribosomal subunit. Forms a cluster with proteins L3 and L19. In the 70S ribosome, L14 and L19 interact and together make contacts with the 16S rRNA in bridges B5 and B8.

Binds to 23S rRNA. Forms part of two intersubunit bridges in the 70S ribosome. This is Large ribosomal subunit protein uL14 from Acinetobacter baylyi (strain ATCC 33305 / BD413 / ADP1).